The following is a 208-amino-acid chain: Thymidylate kinase (208 aa).

10 to 17 (GPDGSGKT) is an ATP binding site.

This sequence belongs to the thymidylate kinase family.

It catalyses the reaction dTMP + ATP = dTDP + ADP. Phosphorylation of dTMP to form dTDP in both de novo and salvage pathways of dTTP synthesis. The protein is Thymidylate kinase of Listeria welshimeri serovar 6b (strain ATCC 35897 / DSM 20650 / CCUG 15529 / CIP 8149 / NCTC 11857 / SLCC 5334 / V8).